Reading from the N-terminus, the 123-residue chain is Small ribosomal subunit protein uS12 (123 aa).

3-methylthioaspartic acid is present on Asp89. The interval 100 to 123 (GSLDTSGVKDRKQGRSKYGTKRPK) is disordered. A compositionally biased stretch (basic residues) spans 113 to 123 (GRSKYGTKRPK).

It belongs to the universal ribosomal protein uS12 family. Part of the 30S ribosomal subunit. Contacts proteins S8 and S17. May interact with IF1 in the 30S initiation complex.

In terms of biological role, with S4 and S5 plays an important role in translational accuracy. Its function is as follows. Interacts with and stabilizes bases of the 16S rRNA that are involved in tRNA selection in the A site and with the mRNA backbone. Located at the interface of the 30S and 50S subunits, it traverses the body of the 30S subunit contacting proteins on the other side and probably holding the rRNA structure together. The combined cluster of proteins S8, S12 and S17 appears to hold together the shoulder and platform of the 30S subunit. This Ectopseudomonas mendocina (strain ymp) (Pseudomonas mendocina) protein is Small ribosomal subunit protein uS12.